We begin with the raw amino-acid sequence, 249 residues long: Aquaporin TIP2-1 (249 aa).

2 helical membrane passes run 20-40 and 54-74; these read AYVAEFIATLLFVFAGVGSAI and AGLVAIAIAHALALFVGVSVA. Residues 83 to 85 carry the NPA 1 motif; sequence NPA. A run of 3 helical transmembrane segments spans residues 102 to 122, 141 to 161, and 168 to 188; these read VFYWVAQLLGATVACLLLGFV, GVVFEVVITFALVYTVYATAA, and LGTIAPIAIGFIVGANILAAG. The NPA 2 signature appears at 196-198; sequence NPA. The helical transmembrane segment at 217–237 threads the bilayer; that stretch reads WVGPLVGGGLAGLVYGDVFIG.

The protein belongs to the MIP/aquaporin (TC 1.A.8) family. TIP (TC 1.A.8.10) subfamily.

It localises to the vacuole membrane. Aquaporins facilitate the transport of water and small neutral solutes across cell membranes. The sequence is that of Aquaporin TIP2-1 (TIP2-1) from Zea mays (Maize).